The following is a 162-amino-acid chain: Caveolin-2 (162 aa).

Residues Met1 to Lys86 are Cytoplasmic-facing. Tyr19 carries the phosphotyrosine; by SRC modification. Phosphoserine is present on residues Ser20 and Ser23. Tyr27 is subject to Phosphotyrosine; by SRC. Phosphoserine is present on Ser36. The segment at residues Phe87–Leu107 is an intramembrane region (helical). Over Ser108–Asp162 the chain is Cytoplasmic.

Belongs to the caveolin family. In terms of assembly, monomer or homodimer. Interacts with CAV1; the interaction forms a stable heterooligomeric complex that is required for targeting to lipid rafts and for caveolae formation. Tyrosine phosphorylated forms do not form heterooligomers with the Tyr-19-phosphorylated form existing as a monomer or dimer, and the Tyr-27-form as a monomer only. Interacts (tyrosine phosphorylated form) with the SH2 domain-containing proteins, RASA1, NCK1 and SRC. Interacts (tyrosine phosphorylated form) with INSR, the interaction (Tyr-27-phosphorylated form) is increased on insulin stimulation. Interacts (Tyr-19 phosphorylated form) with MAPK1 (phosphorylated form); the interaction, promoted by insulin, leads to nuclear location and MAPK1 activation. Interacts with STAT3; the interaction is increased on insulin-induced tyrosine phosphorylation leading to STAT activation. Post-translationally, phosphorylated on serine and tyrosine residues. CAV1 promotes phosphorylation on Ser-23 which then targets the complex to the plasma membrane, lipid rafts and caveolae. Phosphorylation on Ser-36 appears to modulate mitosis in endothelial cells. Phosphorylation on both Tyr-19 and Tyr-27 is required for insulin-induced 'Ser-727' phosphorylation of STAT3 and its activation. Phosphorylation on Tyr-19 is required for insulin-induced phosphorylation of MAPK1 and DNA binding of STAT3. Tyrosine phosphorylation is induced by both EGF and insulin (By. similarity).

The protein resides in the nucleus. It localises to the cytoplasm. The protein localises to the golgi apparatus membrane. It is found in the cell membrane. Its subcellular location is the membrane. The protein resides in the caveola. Functionally, may act as a scaffolding protein within caveolar membranes. Interacts directly with G-protein alpha subunits and can functionally regulate their activity. Acts as an accessory protein in conjunction with CAV1 in targeting to lipid rafts and driving caveolae formation. The Ser-36 phosphorylated form has a role in modulating mitosis in endothelial cells. Positive regulator of cellular mitogenesis of the MAPK signaling pathway. Required for the insulin-stimulated nuclear translocation and activation of MAPK1 and STAT3, and the subsequent regulation of cell cycle progression. This chain is Caveolin-2 (CAV2), found in Otolemur garnettii (Small-eared galago).